Here is a 660-residue protein sequence, read N- to C-terminus: DNA ligase (660 aa).

NAD(+) contacts are provided by residues 31–35, 79–80, and glutamate 111; these read DKEYD and SL. The active-site N6-AMP-lysine intermediate is the lysine 113. Arginine 134, glutamate 168, lysine 280, and lysine 304 together coordinate NAD(+). Cysteine 397, cysteine 400, cysteine 413, and cysteine 419 together coordinate Zn(2+). The BRCT domain maps to 577-660; it reads RQESIFSGKT…LDEAAFEALL (84 aa).

Belongs to the NAD-dependent DNA ligase family. LigA subfamily. The cofactor is Mg(2+). Mn(2+) serves as cofactor.

It catalyses the reaction NAD(+) + (deoxyribonucleotide)n-3'-hydroxyl + 5'-phospho-(deoxyribonucleotide)m = (deoxyribonucleotide)n+m + AMP + beta-nicotinamide D-nucleotide.. In terms of biological role, DNA ligase that catalyzes the formation of phosphodiester linkages between 5'-phosphoryl and 3'-hydroxyl groups in double-stranded DNA using NAD as a coenzyme and as the energy source for the reaction. It is essential for DNA replication and repair of damaged DNA. The sequence is that of DNA ligase from Alkaliphilus metalliredigens (strain QYMF).